The chain runs to 564 residues: Probable lysosomal cobalamin transporter (564 aa).

9 helical membrane-spanning segments follow: residues 8 to 28 (LIWS…STFI), 41 to 61 (VTLI…LLPV), 94 to 114 (TIVY…GIPF), 144 to 164 (YTLF…FIPT), 188 to 208 (ALTF…IIYT), 312 to 332 (LLAG…LCVT), 375 to 395 (VIFT…IAAF), 418 to 438 (LLLT…VAVI), and 506 to 526 (FFGA…LLVL).

It belongs to the LIMR family. LMBRD1 subfamily.

The protein localises to the lysosome membrane. Probable lysosomal cobalamin transporter. Required to export cobalamin from lysosomes allowing its conversion to cofactors. The chain is Probable lysosomal cobalamin transporter from Aspergillus clavatus (strain ATCC 1007 / CBS 513.65 / DSM 816 / NCTC 3887 / NRRL 1 / QM 1276 / 107).